Reading from the N-terminus, the 360-residue chain is Peptide chain release factor 1 (360 aa).

Residue Gln-235 is modified to N5-methylglutamine.

It belongs to the prokaryotic/mitochondrial release factor family. Post-translationally, methylated by PrmC. Methylation increases the termination efficiency of RF1.

The protein localises to the cytoplasm. In terms of biological role, peptide chain release factor 1 directs the termination of translation in response to the peptide chain termination codons UAG and UAA. The protein is Peptide chain release factor 1 of Burkholderia pseudomallei (strain 1106a).